The chain runs to 257 residues: 5'-nucleotidase SurE (257 aa).

4 residues coordinate a divalent metal cation: aspartate 8, aspartate 9, serine 40, and asparagine 95.

It belongs to the SurE nucleotidase family. A divalent metal cation serves as cofactor.

The protein localises to the cytoplasm. The catalysed reaction is a ribonucleoside 5'-phosphate + H2O = a ribonucleoside + phosphate. Its function is as follows. Nucleotidase that shows phosphatase activity on nucleoside 5'-monophosphates. This chain is 5'-nucleotidase SurE, found in Desulfovibrio desulfuricans (strain ATCC 27774 / DSM 6949 / MB).